Reading from the N-terminus, the 162-residue chain is NADH-quinone oxidoreductase subunit I 2 (162 aa).

4Fe-4S ferredoxin-type domains lie at 52–82 and 93–122; these read LRRY…IEAG and VRYD…EGPN. [4Fe-4S] cluster contacts are provided by C62, C65, C68, C72, C102, C105, C108, and C112.

Belongs to the complex I 23 kDa subunit family. NDH-1 is composed of 14 different subunits. Subunits NuoA, H, J, K, L, M, N constitute the membrane sector of the complex. It depends on [4Fe-4S] cluster as a cofactor.

It localises to the cell inner membrane. The enzyme catalyses a quinone + NADH + 5 H(+)(in) = a quinol + NAD(+) + 4 H(+)(out). Functionally, NDH-1 shuttles electrons from NADH, via FMN and iron-sulfur (Fe-S) centers, to quinones in the respiratory chain. The immediate electron acceptor for the enzyme in this species is believed to be ubiquinone. Couples the redox reaction to proton translocation (for every two electrons transferred, four hydrogen ions are translocated across the cytoplasmic membrane), and thus conserves the redox energy in a proton gradient. This is NADH-quinone oxidoreductase subunit I 2 from Rhodopseudomonas palustris (strain BisB5).